Reading from the N-terminus, the 323-residue chain is Serine/threonine-protein kinase-transforming protein raf (323 aa).

The Protein kinase domain maps to 24-284; it reads VMLSTRIGSG…PQILSSIELL (261 aa). ATP is bound by residues 30-38 and K50; that span reads IGSGSFGTV. The Proton acceptor role is filled by D143.

Belongs to the protein kinase superfamily. TKL Ser/Thr protein kinase family. RAF subfamily.

It carries out the reaction L-seryl-[protein] + ATP = O-phospho-L-seryl-[protein] + ADP + H(+). The enzyme catalyses L-threonyl-[protein] + ATP = O-phospho-L-threonyl-[protein] + ADP + H(+). In Murine sarcoma virus 3611, this protein is Serine/threonine-protein kinase-transforming protein raf (V-RAF).